The sequence spans 377 residues: Probable G-protein coupled receptor F27E5.8 (377 aa).

Residues 1-34 are Extracellular-facing; sequence MSEQDSSSPKYMRFLLGNFTSAEMVTDGNFLIYC. N18 is a glycosylation site (N-linked (GlcNAc...) asparagine). Residues 35–55 traverse the membrane as a helical segment; sequence IEMGLLVIGVLENIFMIGAVF. Residues 56-71 lie on the Cytoplasmic side of the membrane; sequence STSCLHLNLRILICNC. Residues 72 to 92 traverse the membrane as a helical segment; it reads CLGFILMAVGRAMIAVPLCIA. Residues 93-105 are Extracellular-facing; it reads HLRDVDISSHAWC. A helical transmembrane segment spans residues 106-126; that stretch reads FIANAVHHSSADSVCLSFVFI. Residues 127–144 lie on the Cytoplasmic side of the membrane; sequence MLERTAGTIWSKDYEKTK. The helical transmembrane segment at 145-165 threads the bilayer; that stretch reads IHIFPCIFAFLQWFIPMFMIL. The Extracellular segment spans residues 166–195; that stretch reads GNFLDRANRMEHFLLYPHLPCQIEYLTPTM. The helical transmembrane segment at 196–216 threads the bilayer; that stretch reads FMITIFIIVIGFIASVGGITI. Topologically, residues 217 to 251 are cytoplasmic; that stretch reads VYNKNIKKYNTRDIWFNTVNLSERYQITENIRSTH. Residues 252-272 form a helical membrane-spanning segment; the sequence is LLFPLLALMLIFSTLSVSVLI. The Extracellular portion of the chain corresponds to 273-303; that stretch reads YGGYWVSVMTKEPARFEEVVKWFGRGGEAAQ. The helical transmembrane segment at 304 to 324 threads the bilayer; that stretch reads LFDIITAIYTISFPICAFICH. The Cytoplasmic portion of the chain corresponds to 325–377; that stretch reads PNLFRFLRKFIGWNSYAVRPSNLNEIGGFEMSTAPIRTQTEFHFQELSRQWNT.

The protein belongs to the G-protein coupled receptor 1 family.

Its subcellular location is the cell membrane. This is Probable G-protein coupled receptor F27E5.8 from Caenorhabditis elegans.